The following is a 217-amino-acid chain: Homologous-pairing protein 2 homolog (217 aa).

Residues 84–152 (ADLHGLDASI…RLKNIKAATN (69 aa)) adopt a coiled-coil conformation. Residues 118-182 (TSALTTPEMQ…WRKRKRMTTE (65 aa)) form a DNA-binding region.

Belongs to the HOP2 family. As to quaternary structure, interacts with the DNA-binding domain of the nuclear receptors NR3C1/GR, ESR2/ER-beta, THRB and RXRA. Forms a stable heterodimer with MND1. Interacts with PSMC3/TBP1. In terms of processing, phosphorylated by PKA, PKC and MAPK. Highly expressed in testis and more specifically in spermatocytes. Detected in spleen, ovary and thymus.

It localises to the nucleus. In terms of biological role, plays an important role in meiotic recombination. Stimulates DMC1-mediated strand exchange required for pairing homologous chromosomes during meiosis. The complex PSMC3IP/MND1 binds DNA, stimulates the recombinase activity of DMC1 as well as DMC1 D-loop formation from double-strand DNA. This complex stabilizes presynaptic RAD51 and DMC1 filaments formed on single strand DNA to capture double-strand DNA. This complex stimulates both synaptic and presynaptic critical steps in RAD51 and DMC1-promoted homologous pairing. May inhibit HIV-1 viral protein TAT activity and modulate the activity of proteasomes through association with PSMC3. The protein is Homologous-pairing protein 2 homolog (Psmc3ip) of Mus musculus (Mouse).